Consider the following 223-residue polypeptide: Protein UGX2 (223 aa).

The segment covering 78 to 95 (SNKRAKMKSKTKLTRTAK) has biased composition (basic residues). The tract at residues 78–117 (SNKRAKMKSKTKLTRTAKQRRESPVCERDESDEDNDSDHY) is disordered. Over residues 96 to 105 (QRRESPVCER) the composition is skewed to basic and acidic residues.

The sequence is that of Protein UGX2 (UGX2) from Saccharomyces cerevisiae (strain ATCC 204508 / S288c) (Baker's yeast).